A 100-amino-acid polypeptide reads, in one-letter code: Trp operon repressor homolog (100 aa).

The DNA-binding element occupies 59–82 (QRQISQMLGVGIATITRGSNELKS). The segment covering 78–93 (NELKSKSDTDKDKLKT) has biased composition (basic and acidic residues). Residues 78–100 (NELKSKSDTDKDKLKTLLEQGAQ) are disordered.

This sequence belongs to the TrpR family. In terms of assembly, homodimer.

It is found in the cytoplasm. Its function is as follows. This protein is an aporepressor. When complexed with L-tryptophan it binds the operator region of the trp operon and prevents the initiation of transcription. This is Trp operon repressor homolog from Vibrio campbellii (strain ATCC BAA-1116).